The following is a 400-amino-acid chain: Phosphoglycerate kinase (400 aa).

Substrate is bound by residues 21–23 (DFN), R36, 59–62 (HLGR), R119, and R160. ATP contacts are provided by residues K211, E329, and 356-359 (GGDS).

The protein belongs to the phosphoglycerate kinase family. As to quaternary structure, monomer.

It is found in the cytoplasm. The enzyme catalyses (2R)-3-phosphoglycerate + ATP = (2R)-3-phospho-glyceroyl phosphate + ADP. It participates in carbohydrate degradation; glycolysis; pyruvate from D-glyceraldehyde 3-phosphate: step 2/5. This chain is Phosphoglycerate kinase, found in Levilactobacillus brevis (strain ATCC 367 / BCRC 12310 / CIP 105137 / JCM 1170 / LMG 11437 / NCIMB 947 / NCTC 947) (Lactobacillus brevis).